A 99-amino-acid polypeptide reads, in one-letter code: Carboxysome shell vertex protein CcmL (99 aa).

The 83-residue stretch at 1 to 83 (MKIARVCGTV…IDAAVVAIID (83 aa)) folds into the BMV domain.

It belongs to the CcmL/EutN family. CcmL subfamily. Homopentamer. May interact with CcmK2, this occurs at very high CcmK2 concentrations. Interacts with full-length CcmM.

It localises to the carboxysome. In terms of biological role, probably forms vertices in the carboxysome, a polyhedral inclusion where RuBisCO (ribulose bisphosphate carboxylase, rbcL-rbcS) is sequestered. Has been modeled to induce curvature upon insertion into an otherwise flat hexagonal molecular layer of CcmK subunits. This chain is Carboxysome shell vertex protein CcmL, found in Thermosynechococcus vestitus (strain NIES-2133 / IAM M-273 / BP-1).